A 278-amino-acid polypeptide reads, in one-letter code: Digeranylgeranylglyceryl phosphate synthase (278 aa).

Helical transmembrane passes span 12-32 (LKNC…ASYF), 34-54 (LAMV…CGFG), 92-112 (LVVM…MAVL), 129-149 (IIGN…GGIA), 153-173 (IDVT…REII), 204-224 (FLLI…FFGI), 226-246 (YMIS…KLVF), and 257-277 (SRNI…GSLF).

This sequence belongs to the UbiA prenyltransferase family. DGGGP synthase subfamily. Requires Mg(2+) as cofactor.

Its subcellular location is the cell membrane. The enzyme catalyses sn-3-O-(geranylgeranyl)glycerol 1-phosphate + (2E,6E,10E)-geranylgeranyl diphosphate = 2,3-bis-O-(geranylgeranyl)-sn-glycerol 1-phosphate + diphosphate. The protein operates within membrane lipid metabolism; glycerophospholipid metabolism. Functionally, prenyltransferase that catalyzes the transfer of the geranylgeranyl moiety of geranylgeranyl diphosphate (GGPP) to the C2 hydroxyl of (S)-3-O-geranylgeranylglyceryl phosphate (GGGP). This reaction is the second ether-bond-formation step in the biosynthesis of archaeal membrane lipids. This is Digeranylgeranylglyceryl phosphate synthase from Methanococcus maripaludis (strain DSM 14266 / JCM 13030 / NBRC 101832 / S2 / LL).